A 299-amino-acid chain; its full sequence is Probable endonuclease 4 (299 aa).

Positions 69, 110, 145, 179, 182, 214, 227, 229, and 259 each coordinate Zn(2+).

The protein belongs to the AP endonuclease 2 family. The cofactor is Zn(2+).

It catalyses the reaction Endonucleolytic cleavage to 5'-phosphooligonucleotide end-products.. In terms of biological role, endonuclease IV plays a role in DNA repair. It cleaves phosphodiester bonds at apurinic or apyrimidinic (AP) sites, generating a 3'-hydroxyl group and a 5'-terminal sugar phosphate. This is Probable endonuclease 4 from Geobacillus kaustophilus (strain HTA426).